The chain runs to 303 residues: Protein bottleneck (303 aa).

Disordered stretches follow at residues 102–142 (SKRN…PTVT) and 185–272 (VATT…ASVR). 2 stretches are compositionally biased toward low complexity: residues 115-138 (RQQEQRQPQEQPLQQEELQHQQQE) and 185-197 (VATTTANSSTANS). Polar residues predominate over residues 260-272 (ATISRQSSSASVR).

In terms of tissue distribution, restricted to the blastoderm.

It localises to the cytoplasm. Its subcellular location is the cytoskeleton. Functionally, acts as a regulator of the microfilament network governing cellularization of the embryo. Determines the timing of a key conformational transition in the cortical microfilament network: the proper coordination of membrane invagination and basal closure of the cells. To do this, bnk possibly physically links neighboring contractile units of the early cycle 14 microfilament network in a manner that prevents basal constriction until the proper stage has been reached. Bnk together with nullo and Sry-alpha may provide auxiliary functions, by acting both to stabilize a large and dynamic microfilament structure and regulate its functions. This chain is Protein bottleneck (bnk), found in Drosophila melanogaster (Fruit fly).